The primary structure comprises 84 residues: Small ribosomal subunit protein bS16 (84 aa).

This sequence belongs to the bacterial ribosomal protein bS16 family.

The protein is Small ribosomal subunit protein bS16 of Methylococcus capsulatus (strain ATCC 33009 / NCIMB 11132 / Bath).